Here is a 297-residue protein sequence, read N- to C-terminus: Probable terminal-alkyne amino-acid exporter (297 aa).

9 helical membrane-spanning segments follow: residues 6-26 (AVWA…AIRV), 32-52 (GVAG…AIAA), 65-85 (LPMI…LLNW), 95-115 (ASLL…VFLG), 123-143 (IAGS…GGHA), 150-170 (WVVL…KPLL), 178-198 (VACY…PAMV), 212-232 (TVYL…YAVA), and 249-269 (VALV…ALVG). EamA domains are found at residues 6–137 (AVWA…AVIA) and 150–281 (WVVL…MLIN).

This sequence belongs to the EamA transporter family.

It is found in the cell membrane. In terms of biological role, probably involved in the export of terminal alkyne-containing amino acids, namely L-propargylglycine (Pra) and L-beta-ethynylserine, that are antibiotics synthesized by enzymes encoded in the same gene cluster. In Streptantibioticus cattleyicolor (strain ATCC 35852 / DSM 46488 / JCM 4925 / NBRC 14057 / NRRL 8057) (Streptomyces cattleya), this protein is Probable terminal-alkyne amino-acid exporter.